The primary structure comprises 159 residues: SsrA-binding protein (159 aa).

Residues 133–147 show a composition bias toward basic and acidic residues; the sequence is KRQDLAKRDAQREMA. Positions 133–159 are disordered; sequence KRQDLAKRDAQREMARAAGRRSKGMDD. Over residues 150–159 the composition is skewed to basic residues; sequence AGRRSKGMDD.

The protein belongs to the SmpB family.

The protein resides in the cytoplasm. Required for rescue of stalled ribosomes mediated by trans-translation. Binds to transfer-messenger RNA (tmRNA), required for stable association of tmRNA with ribosomes. tmRNA and SmpB together mimic tRNA shape, replacing the anticodon stem-loop with SmpB. tmRNA is encoded by the ssrA gene; the 2 termini fold to resemble tRNA(Ala) and it encodes a 'tag peptide', a short internal open reading frame. During trans-translation Ala-aminoacylated tmRNA acts like a tRNA, entering the A-site of stalled ribosomes, displacing the stalled mRNA. The ribosome then switches to translate the ORF on the tmRNA; the nascent peptide is terminated with the 'tag peptide' encoded by the tmRNA and targeted for degradation. The ribosome is freed to recommence translation, which seems to be the essential function of trans-translation. The protein is SsrA-binding protein of Salinispora arenicola (strain CNS-205).